The sequence spans 257 residues: MNLFVLMKRTFDTEEKIVIETGKIQDDGAEWIINPYDEYAIEEAIQLKEKHGGTITAVTVGGEEAEKELRTALAMGCDQAVLINIEDDLDEPDQYSISQVLYHYMKDQEFDLILGGNVAIDGGSGQVAPRLAELLDIPCITTITKLEINGTDAEAERDVEGDVEKIKTTLPLLVTAQQGLNEPRYPSLPGIMKAKKKPLEELELDDLDLDEEDAEPKLKTIERFLPPKKEAGKLLQGEPAEQAKELVSLLRSEAKVI.

Belongs to the ETF beta-subunit/FixA family. In terms of assembly, heterodimer of an alpha and a beta subunit. FAD is required as a cofactor. Requires AMP as cofactor.

Functionally, the electron transfer flavoprotein serves as a specific electron acceptor for other dehydrogenases. It transfers the electrons to the main respiratory chain via ETF-ubiquinone oxidoreductase (ETF dehydrogenase). The sequence is that of Electron transfer flavoprotein subunit beta (etfB) from Bacillus subtilis (strain 168).